The following is a 371-amino-acid chain: MSEICHRSNTRPVRVGNLTIGGSNELFIQSMCTTKTHDVEATVAEILRLEEAGCQIVRVAVPDERAADAIAEIKKRIHIPLVADIHFDYRLALKAIENGIDKVRINPGNIGRKEKVEAVVNAAKAKGIPIRIGVNAGSLERHILEKYGYPTADGMVESALHHIKILEDLDFHDIIVSMKASDVNLAIEAYEKAAKAFNYPLHLGITESGTLFAGTVKSAAGLGAILSKGIGNTLRISLSADPVEEIKVARELLKSFGLASNMATLISCPTCGRIEIDLISIANEVEEYISKLNVPLKVAVLGCAVNGPGEAREADIGIAGARGEGLLFMKGKTVRKVPEETMVEELKKEIDKLAAEMEEKRAAEEVQKANA.

Positions 268, 271, 303, and 310 each coordinate [4Fe-4S] cluster.

Belongs to the IspG family. It depends on [4Fe-4S] cluster as a cofactor.

It catalyses the reaction (2E)-4-hydroxy-3-methylbut-2-enyl diphosphate + oxidized [flavodoxin] + H2O + 2 H(+) = 2-C-methyl-D-erythritol 2,4-cyclic diphosphate + reduced [flavodoxin]. It participates in isoprenoid biosynthesis; isopentenyl diphosphate biosynthesis via DXP pathway; isopentenyl diphosphate from 1-deoxy-D-xylulose 5-phosphate: step 5/6. Functionally, converts 2C-methyl-D-erythritol 2,4-cyclodiphosphate (ME-2,4cPP) into 1-hydroxy-2-methyl-2-(E)-butenyl 4-diphosphate. This chain is 4-hydroxy-3-methylbut-2-en-1-yl diphosphate synthase (flavodoxin), found in Lysinibacillus sphaericus (strain C3-41).